A 63-amino-acid polypeptide reads, in one-letter code: Large ribosomal subunit protein uL29 (63 aa).

The protein belongs to the universal ribosomal protein uL29 family.

In Herminiimonas arsenicoxydans, this protein is Large ribosomal subunit protein uL29.